The chain runs to 634 residues: Kelch-like protein 22 (634 aa).

Ala-2 bears the N-acetylalanine mark. Residues 50-117 (FDVVLVVEGK…IYTSELELSL (68 aa)) enclose the BTB domain. Kelch repeat units lie at residues 299 to 349 (CVVG…VLNN), 350 to 399 (FVYL…VVGK), 400 to 446 (YIYA…TLQG), 448 to 493 (MYIT…ALLD), 495 to 544 (LFVI…VLDS), and 545 to 593 (RIYV…VLTL). Thr-463 carries the post-translational modification Phosphothreonine. Tyr-466 carries the phosphotyrosine modification. Residue Thr-475 is modified to Phosphothreonine. Residues 600–634 (EQPRGTPNRSQADADFASEVMSVSDWEEFDNSSED) form a disordered region. Phosphothreonine is present on Thr-605. Positions 624-634 (DWEEFDNSSED) are enriched in acidic residues.

In terms of assembly, component of the BCR(KLHL22) E3 ubiquitin ligase complex, at least composed of CUL3, KLHL22 and RBX1. Interacts with PLK1. Interacts with DEPDC5 (via DEP domain); the interaction depends on amino acid availability. Interacts with YWHAE; required for the nuclear localization of KLHL22 upon amino acid starvation.

It is found in the cytoplasm. It localises to the cytosol. The protein localises to the cytoskeleton. Its subcellular location is the microtubule organizing center. The protein resides in the centrosome. It is found in the spindle. It localises to the nucleus. The protein localises to the lysosome. Its pathway is protein modification; protein ubiquitination. Substrate-specific adapter of a BCR (BTB-CUL3-RBX1) E3 ubiquitin ligase complex required for chromosome alignment and localization of PLK1 at kinetochores. The BCR(KLHL22) ubiquitin ligase complex mediates monoubiquitination of PLK1, leading to PLK1 dissociation from phosphoreceptor proteins and subsequent removal from kinetochores, allowing silencing of the spindle assembly checkpoint (SAC) and chromosome segregation. Monoubiquitination of PLK1 does not lead to PLK1 degradation. The BCR(KLHL22) ubiquitin ligase complex is also responsible for the amino acid-stimulated 'Lys-48' polyubiquitination and proteasomal degradation of DEPDC5. Through the degradation of DEPDC5, releases the GATOR1 complex-mediated inhibition of the TORC1 pathway. It is therefore an amino acid-dependent activator within the amino acid-sensing branch of the TORC1 pathway, indirectly regulating different cellular processes including cell growth and autophagy. The sequence is that of Kelch-like protein 22 from Mus musculus (Mouse).